Reading from the N-terminus, the 196-residue chain is Probable GTP-binding protein EngB (196 aa).

The EngB-type G domain occupies 22–196 (NLPEIALAGR…GNWIEDKISQ (175 aa)). GTP-binding positions include 30-37 (GRSNVGKS), 57-61 (GKTQT), 75-78 (DVPG), 142-145 (TKMD), and 175-177 (FSS). Serine 37 and threonine 59 together coordinate Mg(2+).

The protein belongs to the TRAFAC class TrmE-Era-EngA-EngB-Septin-like GTPase superfamily. EngB GTPase family. Mg(2+) serves as cofactor.

In terms of biological role, necessary for normal cell division and for the maintenance of normal septation. This is Probable GTP-binding protein EngB from Lactobacillus acidophilus (strain ATCC 700396 / NCK56 / N2 / NCFM).